The primary structure comprises 231 residues: Large ribosomal subunit protein uL1 (231 aa).

This sequence belongs to the universal ribosomal protein uL1 family. Part of the 50S ribosomal subunit.

In terms of biological role, binds directly to 23S rRNA. The L1 stalk is quite mobile in the ribosome, and is involved in E site tRNA release. Functionally, protein L1 is also a translational repressor protein, it controls the translation of the L11 operon by binding to its mRNA. The chain is Large ribosomal subunit protein uL1 from Dechloromonas aromatica (strain RCB).